The sequence spans 418 residues: Pyruvate kinase isozyme G, chloroplastic (418 aa).

2 residues coordinate K(+): aspartate 14 and threonine 15. Arginine 21 contacts ATP. Glutamate 165 contributes to the Mg(2+) binding site. Glycine 188, aspartate 189, and threonine 221 together coordinate substrate. Aspartate 189 serves as a coordination point for Mg(2+).

Belongs to the pyruvate kinase family. Mg(2+) is required as a cofactor. K(+) serves as cofactor. As to expression, expressed in developing and germinating endosperm and in roots.

The protein localises to the plastid. It is found in the chloroplast. The enzyme catalyses pyruvate + ATP = phosphoenolpyruvate + ADP + H(+). It participates in carbohydrate degradation; glycolysis; pyruvate from D-glyceraldehyde 3-phosphate: step 5/5. The sequence is that of Pyruvate kinase isozyme G, chloroplastic from Ricinus communis (Castor bean).